Reading from the N-terminus, the 100-residue chain is Small ribosomal subunit protein uS14c (100 aa).

It belongs to the universal ribosomal protein uS14 family. Part of the 30S ribosomal subunit.

The protein resides in the plastid. Its subcellular location is the chloroplast. Functionally, binds 16S rRNA, required for the assembly of 30S particles. This is Small ribosomal subunit protein uS14c from Illicium oligandrum (Star anise).